The following is a 239-amino-acid chain: Sugar fermentation stimulation protein homolog (239 aa).

This sequence belongs to the SfsA family.

This Agrobacterium fabrum (strain C58 / ATCC 33970) (Agrobacterium tumefaciens (strain C58)) protein is Sugar fermentation stimulation protein homolog.